We begin with the raw amino-acid sequence, 182 residues long: MSRIGKRPITVPAKVQVTIDGTKVVVKGPKGELSRELPVNVSVSQEGETLQVTRRDETRTSRQLHGLSRTLVANMVEGVSQGFQRRLEIQGVGYRAQVQGRNLILNMGYSHQVQIEPPDGIQFAVENNTNVIVSGYDKEIVGNTAAKIRAVRPPEPYKGKGIRYAGEVVRRKAGKTGKGGKK.

Belongs to the universal ribosomal protein uL6 family. As to quaternary structure, part of the 50S ribosomal subunit.

This protein binds to the 23S rRNA, and is important in its secondary structure. It is located near the subunit interface in the base of the L7/L12 stalk, and near the tRNA binding site of the peptidyltransferase center. This is Large ribosomal subunit protein uL6 from Trichormus variabilis (strain ATCC 29413 / PCC 7937) (Anabaena variabilis).